The sequence spans 659 residues: UvrABC system protein B (659 aa).

The 158-residue stretch at 25–182 folds into the Helicase ATP-binding domain; it reads QSIENGNRGQ…KKLIEIQYER (158 aa). ATP is bound at residue 38-45; the sequence is GVTGSGKT. The Beta-hairpin motif lies at 91 to 114; that stretch reads YYDYYQPEAYVPQTDTFIEKDASI. The Helicase C-terminal domain occupies 429–582; that stretch reads QIDDLYGEIQ…QMEYNEEHNI (154 aa). One can recognise a UVR domain in the interval 622–657; sequence EKLIEQYEEEMKEAAKNLQFERAAELRDIIKDLKEN.

Belongs to the UvrB family. Forms a heterotetramer with UvrA during the search for lesions. Interacts with UvrC in an incision complex.

The protein resides in the cytoplasm. Functionally, the UvrABC repair system catalyzes the recognition and processing of DNA lesions. A damage recognition complex composed of 2 UvrA and 2 UvrB subunits scans DNA for abnormalities. Upon binding of the UvrA(2)B(2) complex to a putative damaged site, the DNA wraps around one UvrB monomer. DNA wrap is dependent on ATP binding by UvrB and probably causes local melting of the DNA helix, facilitating insertion of UvrB beta-hairpin between the DNA strands. Then UvrB probes one DNA strand for the presence of a lesion. If a lesion is found the UvrA subunits dissociate and the UvrB-DNA preincision complex is formed. This complex is subsequently bound by UvrC and the second UvrB is released. If no lesion is found, the DNA wraps around the other UvrB subunit that will check the other stand for damage. In Clostridium perfringens (strain SM101 / Type A), this protein is UvrABC system protein B.